Consider the following 1711-residue polypeptide: Protein chiffon (1711 aa).

Disordered regions lie at residues 1–31 (MQPQ…AATP), 87–129 (KPEV…SRAD), and 244–307 (TKSK…IDSS). The segment at 1–400 (MQPQSDKQSA…PALREKSKRI (400 aa)) is sufficient for interaction with and activation of Cdc7. Low complexity-rich tracts occupy residues 10 to 30 (ASRL…TAAT) and 97 to 109 (TPGT…TPTS). 2 positions are modified to phosphoserine: Ser-306 and Ser-307. The DBF4-type zinc finger occupies 307 to 356 (SEKQGGVCEICKLEYDILNIHLQSKDHELFAKNSDNFLALDTLIQSSADV). Zn(2+) contacts are provided by Cys-314, Cys-317, His-327, and His-333. Over residues 365 to 378 (VESELDMDVDESLS) the composition is skewed to acidic residues. Disordered regions lie at residues 365-507 (VESE…DSPS), 531-647 (MFPR…KPQL), 733-771 (LDEE…REQR), 791-817 (TEVK…KVKQ), 908-945 (QDKG…YKNK), 1005-1025 (RSTS…CRNK), 1055-1157 (QRQD…RNQS), 1271-1290 (ESEG…PPTD), 1303-1329 (MGSA…RMSN), 1343-1370 (LKSN…ALPD), and 1383-1644 (LHPI…SKYA). Ser-406, Ser-407, Ser-417, Ser-432, and Ser-435 each carry phosphoserine. Residues 429 to 439 (QGNSPGSLSEL) are compositionally biased toward polar residues. The span at 445–454 (PTTAAATPTT) shows a compositional bias: low complexity. Position 467 is a phosphoserine (Ser-467). The a.T hook DNA-binding region spans 493 to 505 (PRGRGRPPNQVDS). Residues 537 to 546 (VPTTRSSSEL) are compositionally biased toward polar residues. Residues Ser-542, Ser-543, and Ser-544 each carry the phosphoserine modification. Residues 549-560 (DVDRQTTSDVRG) are compositionally biased toward basic and acidic residues. Over residues 563–575 (SISSASLDTSTSE) the composition is skewed to low complexity. A compositionally biased stretch (basic residues) spans 588–601 (IRKRAQAVGRRRKV). The segment covering 793 to 812 (VKTSPSKSRTKIQKPSSPTK) has biased composition (polar residues). Residues 908 to 932 (QDKGEQIKLEDQKPAPKKEVKKEEE) show a composition bias toward basic and acidic residues. Low complexity predominate over residues 1006–1018 (STSSSSCSNSQRS). Phosphothreonine is present on Thr-1081. Phosphoserine occurs at positions 1091 and 1092. The segment covering 1092-1101 (SPRTTRSQAA) has biased composition (polar residues). Residues 1398-1407 (TTTTTTTTTT) show a composition bias toward low complexity. The interval 1400-1695 (TTTTTTTTSA…NAWRRTQRRA (296 aa)) is sufficient for interaction with Gcn5. The segment covering 1435-1445 (ADDKQNSREDA) has biased composition (basic and acidic residues). Composition is skewed to acidic residues over residues 1453-1475 (DVDE…DETM) and 1483-1518 (QDVE…EEQD). 2 stretches are compositionally biased toward polar residues: residues 1536–1545 (ISVTTPPEDS) and 1556–1591 (HNGQ…SCIS).

Component of the Dbf4-dependent kinase (DDK) complex consisting of Cdc7 and the Dbf4 ortholog chif. Interacts with Cdc7; the interaction is direct. Interacts with CG5790. As to quaternary structure, component of the Chiffon histone acetyltransferase (CHAT) complex consisting of Ada3, Sgf29, Gcn5, chif/chiffon and Ada2b (Isoform A). Interacts (via C-terminus) with Gcn5; the interaction is direct but weak in the absence of other CHAT components. In terms of processing, may be proteolytically cleaved to produce a N-terminal 50 kDa product.

It localises to the nucleus. A bicistronic gene producing two proteins that are components of different complexes and have separate properties and functions. Full-length protein is proteolytically cleaved, producing a ~50kDa N-terminal product (Chiffon-A) that forms part of the DDK complex; it is unclear if the C-terminal proteolytic product is stable or functional. Alternative initiation from an internal ribosome entry site produces a C-terminal ~48kDa product (Chiffon-B or Isoform E) that forms part of the CHAT complex. Involved in regulation of gene expression during embryonic development. Functionally, regulatory component of the Dbf4-dependent kinase (DDK) complex. Required for the amplification stage, but not the preceding endoreplication stage of DNA replication in egg chamber follicle cells of the ovary. May be involved in initiation of DNA replication; activation of the chorion gene origins. May have a role in eye and thoracic bristle development. Required for female fertility; is not required for oogenesis but is required maternally for early embryo development. Its function is as follows. Component of the CHAT histone acetyltransferase complex, which predominantly acetylates histone H3. As part of the CHAT complex involved in acetylation of histone H3 on 'Lys-10' (H3K9ac), 'Lys-15' (H3K14ac) and 'Lys-19' (H3K18ac), but not 'Lys-25' (H3K24ac). May also regulate other histone acetyltransferase complexes. Essential for viability. Not required for early stages of embryonic development. May be involved in zygotic genome activation during embryogenesis. In Drosophila melanogaster (Fruit fly), this protein is Protein chiffon.